The following is a 430-amino-acid chain: Trigger factor (430 aa).

The PPIase FKBP-type domain maps to 163–248 (GNIAIIDFKG…IKDIKVKELP (86 aa)).

It belongs to the FKBP-type PPIase family. Tig subfamily.

The protein localises to the cytoplasm. The enzyme catalyses [protein]-peptidylproline (omega=180) = [protein]-peptidylproline (omega=0). Its function is as follows. Involved in protein export. Acts as a chaperone by maintaining the newly synthesized protein in an open conformation. Functions as a peptidyl-prolyl cis-trans isomerase. The polypeptide is Trigger factor (Clostridium botulinum (strain Okra / Type B1)).